Consider the following 231-residue polypeptide: Ion-translocating oxidoreductase complex subunit E (231 aa).

A run of 6 helical transmembrane segments spans residues alanine 18–alanine 38, leucine 39–leucine 59, threonine 63–valine 83, leucine 86–valine 106, alanine 125–leucine 145, and proline 182–glycine 202.

It belongs to the NqrDE/RnfAE family. As to quaternary structure, the complex is composed of six subunits: RsxA, RsxB, RsxC, RsxD, RsxE and RsxG.

It is found in the cell inner membrane. Its function is as follows. Part of a membrane-bound complex that couples electron transfer with translocation of ions across the membrane. Required to maintain the reduced state of SoxR. The protein is Ion-translocating oxidoreductase complex subunit E of Escherichia coli O7:K1 (strain IAI39 / ExPEC).